We begin with the raw amino-acid sequence, 95 residues long: Co-chaperonin GroES (95 aa).

It belongs to the GroES chaperonin family. Heptamer of 7 subunits arranged in a ring. Interacts with the chaperonin GroEL.

The protein localises to the cytoplasm. Its function is as follows. Together with the chaperonin GroEL, plays an essential role in assisting protein folding. The GroEL-GroES system forms a nano-cage that allows encapsulation of the non-native substrate proteins and provides a physical environment optimized to promote and accelerate protein folding. GroES binds to the apical surface of the GroEL ring, thereby capping the opening of the GroEL channel. This is Co-chaperonin GroES from Xanthomonas axonopodis pv. citri (strain 306).